The chain runs to 221 residues: Ribosomal RNA small subunit methyltransferase G (221 aa).

Residues Gly-78, Phe-83, and Arg-150 each contribute to the S-adenosyl-L-methionine site.

This sequence belongs to the methyltransferase superfamily. RNA methyltransferase RsmG family.

The protein localises to the cytoplasm. Its function is as follows. Specifically methylates the N7 position of a guanine in 16S rRNA. In Bifidobacterium longum (strain DJO10A), this protein is Ribosomal RNA small subunit methyltransferase G.